The primary structure comprises 232 residues: MANEIPTKGILKSEALKQYIMETSAYPREHELLKELRKATVQKYGNLSEMEVPVDEGHFLSMLVKIMNAKNTIEIGVFTGYSLLTTALALPEDGRITAIDIDKEAYEVGLEFIKKAGVDHKINFIHSDGLKALDQLVNDKCEFDFAFADADKSSYVNFHERLLKLVKVGGIIAFDNTLWFGFVAEDEDGVPEHMREYRAALIEFNKKLALDPRVEVSQISIGDGITLCRRLV.

K8 lines the substrate pocket. S-adenosyl-L-methionine contacts are provided by residues V52, E74, 76–77 (GV), S82, and D100. A substrate-binding site is contributed by D149. D149 is a binding site for a divalent metal cation. D151 is an S-adenosyl-L-methionine binding site. A divalent metal cation-binding residues include D175 and N176.

This sequence belongs to the class I-like SAM-binding methyltransferase superfamily. Cation-dependent O-methyltransferase family. CCoAMT subfamily. Requires a divalent metal cation as cofactor.

It catalyses the reaction (E)-caffeoyl-CoA + S-adenosyl-L-methionine = (E)-feruloyl-CoA + S-adenosyl-L-homocysteine + H(+). It participates in aromatic compound metabolism; phenylpropanoid biosynthesis. Methylates caffeoyl-CoA to feruloyl-CoA and 5-hydroxyferuloyl-CoA to sinapoyl-CoA. Plays a role in the synthesis of feruloylated polysaccharides. Involved in the reinforcement of the plant cell wall. Also involved in the responding to wounding or pathogen challenge by the increased formation of cell wall-bound ferulic acid polymers. The chain is Putative caffeoyl-CoA O-methyltransferase At1g67980 from Arabidopsis thaliana (Mouse-ear cress).